The sequence spans 880 residues: Probable potassium channel AKT5 (880 aa).

Topologically, residues 1 to 82 are cytoplasmic; sequence MGIEKRKKMV…PFDPRYRAWD (82 aa). The chain crosses the membrane as a helical span at residues 83–103; that stretch reads WFLVILVLYTAWASPFEFGFL. Topologically, residues 104–111 are extracellular; the sequence is QTPRAPLS. The chain crosses the membrane as a helical span at residues 112-132; the sequence is ILDNVVNGFFAVDIVLTFFVA. Over 133 to 153 the chain is Cytoplasmic; sequence FLDKATYLLVDDPKRIAWRYT. The helical transmembrane segment at 154–174 threads the bilayer; that stretch reads STWLIFDVVSTVPYELFGSLL. At 175–182 the chain is on the extracellular side; it reads HNTIQGYG. A helical; Voltage-sensor membrane pass occupies residues 183-203; sequence IFSMLRLWRLHRVSKCFARLE. Residues 204 to 217 are Cytoplasmic-facing; the sequence is KDRKYNYFWIRCTK. Residues 218–238 traverse the membrane as a helical segment; the sequence is LLLVSLFVVHCGACFCYSIAA. Topologically, residues 239 to 265 are extracellular; it reads HYPDPSMTFMALAEANWKQKSLLIRYV. The pore-forming intramembrane region spans 266 to 285; it reads TAMYWSITTFSTTGYGDIHG. Topologically, residues 286–291 are extracellular; sequence NNAEER. A helical transmembrane segment spans residues 292–312; that stretch reads AFILFYMIFNLGLLAYIIGNM. Residues 313–880 lie on the Cytoplasmic side of the membrane; sequence TNLVVHVTSR…GDFLLLLKVS (568 aa). A nucleoside 3',5'-cyclic phosphate is bound at residue 396–517; sequence LFHGISNDLL…IMNNLLQHLK (122 aa). ANK repeat units follow at residues 541–570, 574–603, 607–636, 637–667, and 671–700; these read DLPL…NPNE, NGRT…DPNI, EGSV…TLSF, DTVG…DISL, and NGTT…DMDK. Residues 809–880 form the KHA domain; it reads VGGVYPARVT…GDFLLLLKVS (72 aa).

It belongs to the potassium channel family. Plant (TC 1.A.1.4) subfamily. The potassium channel is probably composed of a homo- or heterotetrameric complex of pore-forming subunits. In terms of tissue distribution, predominantly expressed in flowers.

It localises to the membrane. Functionally, probable potassium channel. May interact with the cytoskeleton or with regulatory proteins. This Arabidopsis thaliana (Mouse-ear cress) protein is Probable potassium channel AKT5 (AKT5).